The chain runs to 102 residues: Small ribosomal subunit protein uS10 (102 aa).

It belongs to the universal ribosomal protein uS10 family. In terms of assembly, part of the 30S ribosomal subunit.

Functionally, involved in the binding of tRNA to the ribosomes. The sequence is that of Small ribosomal subunit protein uS10 from Chloroflexus aurantiacus (strain ATCC 29366 / DSM 635 / J-10-fl).